The sequence spans 233 residues: Large ribosomal subunit protein uL3 (233 aa).

The disordered stretch occupies residues 145 to 172 (FGSQRASHGNSRSHRVPGSIGQAQDPGR). At Q168 the chain carries N5-methylglutamine.

It belongs to the universal ribosomal protein uL3 family. As to quaternary structure, part of the 50S ribosomal subunit. Forms a cluster with proteins L14 and L19. Methylated by PrmB.

One of the primary rRNA binding proteins, it binds directly near the 3'-end of the 23S rRNA, where it nucleates assembly of the 50S subunit. This is Large ribosomal subunit protein uL3 from Bordetella petrii (strain ATCC BAA-461 / DSM 12804 / CCUG 43448).